A 111-amino-acid polypeptide reads, in one-letter code: Resistin-like gamma (111 aa).

The first 23 residues, 1–23 (MKTAICSLLICIFLLQLMVPVNT), serve as a signal peptide directing secretion. Cystine bridges form between Cys-55/Cys-108, Cys-67/Cys-107, Cys-76/Cys-93, Cys-78/Cys-95, and Cys-82/Cys-97.

The protein belongs to the resistin/FIZZ family. As to quaternary structure, homodimer. Heterodimer with RETNLB. Highly expressed in bone marrow, spleen and white blood cells. Also detected at low levels in thymus, lung, trachea, white adipose tissue, nasal respiratory epithelium, colon, small intestine, kidney, liver, and heart.

Its subcellular location is the secreted. In terms of biological role, probable hormone. Promotes chemotaxis in myeloid cells. The chain is Resistin-like gamma from Rattus norvegicus (Rat).